The sequence spans 320 residues: Lactamase-like protein GME11357 (320 aa).

Zn(2+) contacts are provided by His106, His108, Asp110, and His111. The active-site Proton donor/acceptor is Asp110.

The protein belongs to the metallo-beta-lactamase superfamily. Zn(2+) is required as a cofactor.

Its pathway is secondary metabolite biosynthesis. Functionally, lactamase-like protein; part of the gene cluster that mediates the biosynthesis of dibenzodioxocinones such as pestalotiollide B, a novel class of inhibitors against cholesterol ester transfer protein (CEPT). The biosynthesis initiates from condensation of acetate and malonate units catalyzed by the non-reducing PKS pks8/GME11356. Pks8/GME11356 lacks a thioesterase (TE) domain, which is important to the cyclizing of the third ring of atrochrysone carboxylic acid, and the esterase GME11355 might play the role of TE and catalyzes the cyclization reaction of the C ring. The lactamase-like protein GME11357 (or other beta-lactamases in Pestalotiopsis microspora) probably hydrolyzes the thioester bond between the ACP of pks8/GME11356 and the intermediate to release atrochrysone carboxylic acid, which is spontaneously dehydrates to form endocrocin anthrone. Endocrocin anthrone is further converted to emodin via the endocrocin intermediate. Emodin is then oxidized by several enzymes such as the Baeyer-Villiger oxidase GME11358, the oxidoreductase GME11367, the short chain dehydrogenase/reductase GME11373, as well as by other oxidoreductases from the cluster, to modify the A and C rings and open the B ring, and finally yield monodictyphenone. The prenyltransferase GME11375 may catalyze the addition reaction between the C5 side chains and the carbon bone of dibenzodioxocinones. The remaining biochemical reactions to the final product dibenzodioxocinones should be methylation catalyzed by methyltransferase GME11366 and reduction and lactonization reaction catalyzed by a series of oxidordeuctases. The sequence is that of Lactamase-like protein GME11357 from Pestalotiopsis microspora.